We begin with the raw amino-acid sequence, 445 residues long: Phosphoglucosamine mutase (445 aa).

Serine 102 serves as the catalytic Phosphoserine intermediate. Mg(2+) is bound by residues serine 102, aspartate 241, aspartate 243, and aspartate 245. Position 102 is a phosphoserine (serine 102).

It belongs to the phosphohexose mutase family. Mg(2+) is required as a cofactor. Activated by phosphorylation.

It catalyses the reaction alpha-D-glucosamine 1-phosphate = D-glucosamine 6-phosphate. Its function is as follows. Catalyzes the conversion of glucosamine-6-phosphate to glucosamine-1-phosphate. This is Phosphoglucosamine mutase from Shewanella halifaxensis (strain HAW-EB4).